Here is a 768-residue protein sequence, read N- to C-terminus: Actin filament-associated protein 1-like 1 (768 aa).

The disordered stretch occupies residues 82–145; that stretch reads DLRDMPEDDG…GKSPEYISSH (64 aa). Ser-94, Ser-98, Ser-104, and Ser-153 each carry phosphoserine. The tract at residues 173-211 is disordered; sequence GELKSSYNDSDAMSSSYESYDEEEEEGKSPQPRHQWPSE. A compositionally biased stretch (low complexity) spans 177–190; that stretch reads SSYNDSDAMSSSYE. Residues 220 to 316 enclose the PH 1 domain; sequence ECRICAFLLR…WLKVIREVSK (97 aa). Residues Ser-329 and Ser-343 each carry the phosphoserine modification. A PH 2 domain is found at 418 to 512; it reads EVPCCGYLNV…WLGLLLVEMG (95 aa). The residue at position 557 (Tyr-557) is a Phosphotyrosine. Residues 566–604 form a disordered region; the sequence is QDEEPERPTGAQVKRHASSCSEKSHRVDPQVKVKRHASS. A compositionally biased stretch (basic and acidic residues) spans 587–596; that stretch reads EKSHRVDPQV. Residues 611–700 adopt a coiled-coil conformation; sequence GKNRAEEDAR…VAVKERLQQS (90 aa). Positions 705 to 768 are disordered; it reads PALGLSVSSK…KAKEWEMKKT (64 aa). The segment covering 710 to 729 has biased composition (polar residues); it reads SVSSKPKSGETANKPQNSVP. Residue Ser-747 is modified to Phosphoserine. Basic and acidic residues predominate over residues 759-768; it reads KAKEWEMKKT.

Interacts with CTTN. Expressed in breast, colon and brain. In all 3 tissues, expressed in the microvasculature (at protein level). In addition, in the breast, found in the contractile myoepithelial cell layer which surrounds the breast ducts (at protein level). In the colon, expressed in the mucous membrane and colonic crypts and in the smooth muscle cell layer which provide movement of the colon (at protein level). In the cerebellum, localized around the Purkinje neurons and the granule cells of the granular layer, but not inside cell bodies (at protein level). Outside of the cerebellar cortex, expressed in glial cells (at protein level). Highly expressed away from the cell bodies within the dentate nucleus (at protein level).

The protein resides in the cytoplasm. It localises to the cell projection. The protein localises to the podosome. It is found in the invadopodium. Its subcellular location is the cytoskeleton. The protein resides in the stress fiber. Its function is as follows. May be involved in podosome and invadosome formation. This chain is Actin filament-associated protein 1-like 1 (AFAP1L1), found in Homo sapiens (Human).